The primary structure comprises 422 residues: Vitamin D3 receptor (422 aa).

The nuclear receptor DNA-binding region spans 22–90; sequence PRICGVCGDK…RLKRCVDIGM (69 aa). Cys-25, Cys-28, Cys-42, Cys-45, Cys-61, Cys-67, Cys-77, and Cys-80 together coordinate Zn(2+). 2 NR C4-type zinc fingers span residues 25–45 and 61–85; these read CGVCGDKATGFHFNAMTCEGC and CPFNGDCRITKDNRRHCQSCRLKRC. Positions 98–127 are hinge; the sequence is DEEVQRKRQMINKRKSEEALKESMRPKISD. The NR LBD domain occupies 128-418; it reads EQQKMIDILL…LTPLMLEVFS (291 aa). Residues 170–191 are disordered; that stretch reads RSSSVHTQGSPSEDSDVFTSSP. Position 232 (Ser-232) interacts with calcitriol. An interaction with coactivator LXXLL motif region spans residues 241–259; sequence KMIPGFRDLIAEDQIALLK. Arg-269, Ser-273, His-300, and His-392 together coordinate calcitriol. The short motif at 411 to 419 is the 9aaTAD element; sequence PLMLEVFSD.

The protein belongs to the nuclear hormone receptor family. NR1 subfamily. In terms of assembly, homodimer in the absence of bound vitamin D3. Heterodimer with RXRA after vitamin D3 binding. Detected in all tissues examined. Highest level in small intestine and skin.

The protein localises to the nucleus. It localises to the cytoplasm. Nuclear receptor for calcitriol, the active form of vitamin D3 which mediates the action of this vitamin on cells. Enters the nucleus upon vitamin D3 binding where it forms heterodimers with the retinoid X receptor/RXR. The VDR-RXR heterodimers bind to specific response elements on DNA and activate the transcription of vitamin D3-responsive target genes. Plays a central role in calcium homeostasis. Also functions as a receptor for the secondary bile acid lithocholic acid (LCA) and its metabolites. In Xenopus laevis (African clawed frog), this protein is Vitamin D3 receptor (vdr).